We begin with the raw amino-acid sequence, 255 residues long: Sporulation-specific N-acetylmuramoyl-L-alanine amidase (255 aa).

The MurNAc-LAA domain occupies isoleucine 4 to glutamate 172. Zn(2+) contacts are provided by histidine 10, glutamate 24, and histidine 79. Residue glutamate 141 is part of the active site. Residues threonine 180–glutamate 254 form the SPOR domain. 2 repeat units span residues glycine 184–aspartate 219 and glycine 220–serine 255. Positions glycine 184–serine 255 are 2 X 35 AA approximate tandem repeats.

It belongs to the N-acetylmuramoyl-L-alanine amidase 3 family. Zn(2+) serves as cofactor.

The protein localises to the secreted. Its subcellular location is the cell wall. It carries out the reaction Hydrolyzes the link between N-acetylmuramoyl residues and L-amino acid residues in certain cell-wall glycopeptides.. Inhibited by EDTA. Functionally, autolysins are involved in some important biological processes such as cell separation, cell-wall turnover, competence for genetic transformation, formation of the flagella - in particular of its basal body - and sporulation. CwlC is able to hydrolyze type A cell walls such as B.subtilis. Its main function is to lyze the mother cell wall peptidoglycan, playing a role during sporulation. The sequence is that of Sporulation-specific N-acetylmuramoyl-L-alanine amidase (cwlC) from Bacillus subtilis (strain 168).